The primary structure comprises 217 residues: Translation initiation factor 6 (217 aa).

It belongs to the eIF-6 family.

In terms of biological role, binds to the 50S ribosomal subunit and prevents its association with the 30S ribosomal subunit to form the 70S initiation complex. In Methanococcoides burtonii (strain DSM 6242 / NBRC 107633 / OCM 468 / ACE-M), this protein is Translation initiation factor 6.